The sequence spans 270 residues: Type III pantothenate kinase (270 aa).

6–13 (DVRNTHTV) is an ATP binding site. 109-112 (GADR) is a substrate binding site. Asp-111 acts as the Proton acceptor in catalysis. Asp-131 contributes to the K(+) binding site. Position 134 (Ser-134) interacts with ATP. Position 186 (Thr-186) interacts with substrate.

Belongs to the type III pantothenate kinase family. In terms of assembly, homodimer. NH4(+) serves as cofactor. The cofactor is K(+).

The protein localises to the cytoplasm. It carries out the reaction (R)-pantothenate + ATP = (R)-4'-phosphopantothenate + ADP + H(+). Its pathway is cofactor biosynthesis; coenzyme A biosynthesis; CoA from (R)-pantothenate: step 1/5. Its function is as follows. Catalyzes the phosphorylation of pantothenate (Pan), the first step in CoA biosynthesis. The chain is Type III pantothenate kinase from Mycolicibacterium gilvum (strain PYR-GCK) (Mycobacterium gilvum (strain PYR-GCK)).